Consider the following 396-residue polypeptide: Dihydrolipoyllysine-residue acetyltransferase component of pyruvate dehydrogenase complex (396 aa).

A Lipoyl-binding domain is found at 1-69; it reads MPDIGLEEVE…KTDALIMRCE (69 aa). The residue at position 35 (K35) is an N6-lipoyllysine. A Peripheral subunit-binding (PSBD) domain is found at 104-141; the sequence is HATPLIRRLARNLNINLYDVVGTGPKNRILKEDLDLYQ. H369 is a catalytic residue.

The protein belongs to the 2-oxoacid dehydrogenase family. As to quaternary structure, forms a 24-polypeptide structural core with octahedral symmetry. (R)-lipoate is required as a cofactor.

It catalyses the reaction N(6)-[(R)-dihydrolipoyl]-L-lysyl-[protein] + acetyl-CoA = N(6)-[(R)-S(8)-acetyldihydrolipoyl]-L-lysyl-[protein] + CoA. Its function is as follows. The pyruvate dehydrogenase complex catalyzes the overall conversion of pyruvate to acetyl-CoA and CO(2). It contains multiple copies of three enzymatic components: pyruvate dehydrogenase (E1), dihydrolipoamide acetyltransferase (E2) and lipoamide dehydrogenase (E3). The polypeptide is Dihydrolipoyllysine-residue acetyltransferase component of pyruvate dehydrogenase complex (aceF) (Buchnera aphidicola subsp. Acyrthosiphon pisum (strain APS) (Acyrthosiphon pisum symbiotic bacterium)).